The chain runs to 257 residues: NAD-capped RNA hydrolase NudC (257 aa).

Residue Arg69 participates in substrate binding. Cys98 and Cys101 together coordinate Zn(2+). Glu111 is a binding site for substrate. 2 residues coordinate Zn(2+): Cys116 and Cys119. Tyr124 contacts substrate. In terms of domain architecture, Nudix hydrolase spans 125-248 (PQIAPCIIVA…TVARRLIEDT (124 aa)). Ala158, Glu174, and Glu178 together coordinate a divalent metal cation. The Nudix box signature appears at 159 to 180 (GFVEVGETLEQAVAREVMEESG). 192–199 (QPWPFPQS) provides a ligand contact to substrate. Glu219 serves as a coordination point for a divalent metal cation. Substrate is bound at residue Ala241.

It belongs to the Nudix hydrolase family. NudC subfamily. Homodimer. The cofactor is Mg(2+). Mn(2+) is required as a cofactor. Requires Zn(2+) as cofactor.

It catalyses the reaction a 5'-end NAD(+)-phospho-ribonucleoside in mRNA + H2O = a 5'-end phospho-adenosine-phospho-ribonucleoside in mRNA + beta-nicotinamide D-ribonucleotide + 2 H(+). It carries out the reaction NAD(+) + H2O = beta-nicotinamide D-ribonucleotide + AMP + 2 H(+). The enzyme catalyses NADH + H2O = reduced beta-nicotinamide D-ribonucleotide + AMP + 2 H(+). MRNA decapping enzyme that specifically removes the nicotinamide adenine dinucleotide (NAD) cap from a subset of mRNAs by hydrolyzing the diphosphate linkage to produce nicotinamide mononucleotide (NMN) and 5' monophosphate mRNA. The NAD-cap is present at the 5'-end of some mRNAs and stabilizes RNA against 5'-processing. Has preference for mRNAs with a 5'-end purine. Catalyzes the hydrolysis of a broad range of dinucleotide pyrophosphates. The polypeptide is NAD-capped RNA hydrolase NudC (Salmonella typhimurium (strain LT2 / SGSC1412 / ATCC 700720)).